Consider the following 214-residue polypeptide: GTP cyclohydrolase 1 (214 aa).

3 residues coordinate Zn(2+): C108, H111, and C179.

Belongs to the GTP cyclohydrolase I family. Toroid-shaped homodecamer, composed of two pentamers of five dimers.

The enzyme catalyses GTP + H2O = 7,8-dihydroneopterin 3'-triphosphate + formate + H(+). It functions in the pathway cofactor biosynthesis; 7,8-dihydroneopterin triphosphate biosynthesis; 7,8-dihydroneopterin triphosphate from GTP: step 1/1. The sequence is that of GTP cyclohydrolase 1 from Shewanella putrefaciens (strain CN-32 / ATCC BAA-453).